Here is a 118-residue protein sequence, read N- to C-terminus: Probable non-functional immunoglobulin lambda variable 1-50 (118 aa).

Positions 1–19 (MAWSSLLLTLLAHCTGSWA) are cleaved as a signal peptide. The segment at 20–44 (QSVLTQPPSVSGAPGQRVTISCTGS) is framework-1. The Ig-like domain maps to 20-118 (QSVLTQPPSV…CKAWDNSLNA (99 aa)). A disulfide bridge links cysteine 41 with cysteine 109. The tract at residues 45-53 (SSNIGAGYV) is complementarity-determining-1. The framework-2 stretch occupies residues 54–70 (VHWYQQLPGTAPKLLIY). The tract at residues 71–73 (GNS) is complementarity-determining-2. The segment at 74–109 (NRPSGVPDQFSGSKSGTSASLAITGLQSEDEADYYC) is framework-3. A complementarity-determining-3 region spans residues 110–118 (KAWDNSLNA).

In terms of assembly, immunoglobulins are composed of two identical heavy chains and two identical light chains; disulfide-linked.

It is found in the secreted. Its subcellular location is the cell membrane. Probable non-functional open reading frame (ORF) of V region of the variable domain of immunoglobulin light chains. Non-functional ORF generally cannot participate in the synthesis of a productive immunoglobulin chain due to altered V-(D)-J or switch recombination and/or splicing site (at mRNA level) and/or conserved amino acid change (protein level). Immunoglobulins, also known as antibodies, are membrane-bound or secreted glycoproteins produced by B lymphocytes. In the recognition phase of humoral immunity, the membrane-bound immunoglobulins serve as receptors which, upon binding of a specific antigen, trigger the clonal expansion and differentiation of B lymphocytes into immunoglobulins-secreting plasma cells. Secreted immunoglobulins mediate the effector phase of humoral immunity, which results in the elimination of bound antigens. The antigen binding site is formed by the variable domain of one heavy chain, together with that of its associated light chain. Thus, each immunoglobulin has two antigen binding sites with remarkable affinity for a particular antigen. The variable domains are assembled by a process called V-(D)-J rearrangement and can then be subjected to somatic hypermutations which, after exposure to antigen and selection, allow affinity maturation for a particular antigen. The chain is Probable non-functional immunoglobulin lambda variable 1-50 from Homo sapiens (Human).